The chain runs to 590 residues: Leucine-rich repeat transmembrane neuronal protein 4 (590 aa).

A signal peptide spans 1–30 (MGFRLITQLKGMSVFLVLFPTLLLVMLTGA). The LRRNT domain maps to 31 to 61 (QRACPKNCRCDGKIVYCESHAFADIPENISG). At 31–424 (QRACPKNCRC…HEYEHVSFHK (394 aa)) the chain is on the extracellular side. N-linked (GlcNAc...) asparagine glycosylation is present at asparagine 58. LRR repeat units follow at residues 62–83 (GSQG…QFAG), 86–107 (QLIW…AFQG), 110–131 (RLKE…TFHP), 134–155 (NLRN…QFKG), 158–179 (KLII…VFQD), 182–203 (NLDF…AFAG), 206–226 (KLKE…AHFP), 230–251 (NLRS…LTWT), 254–275 (SLHT…TFKC), and 278–299 (NLQK…TVNA). An N-linked (GlcNAc...) asparagine glycan is attached at asparagine 126. Residue asparagine 291 is glycosylated (N-linked (GlcNAc...) asparagine). The region spanning 311-362 (NMWECSRSICPLFYWLKNFKGNKESTMICAGPKHIQGEKVSDAVETYNICSD) is the LRRCT domain. The helical transmembrane segment at 425 to 445 (IIAGSVALFLSVAMILLVIYV) threads the bilayer. Residues 446 to 590 (SWKRYPASMK…PAIYLERITN (145 aa)) are Cytoplasmic-facing.

Belongs to the LRRTM family. As to quaternary structure, peripherally associated with AMPAR complex. AMPAR complex consists of an inner core made of 4 pore-forming GluA/GRIA proteins (GRIA1, GRIA2, GRIA3 and GRIA4) and 4 major auxiliary subunits arranged in a twofold symmetry. One of the two pairs of distinct binding sites is occupied either by CNIH2, CNIH3 or CACNG2, CACNG3. The other harbors CACNG2, CACNG3, CACNG4, CACNG8 or GSG1L. This inner core of AMPAR complex is complemented by outer core constituents binding directly to the GluA/GRIA proteins at sites distinct from the interaction sites of the inner core constituents. Outer core constituents include at least PRRT1, PRRT2, CKAMP44/SHISA9, FRRS1L and NRN1. The proteins of the inner and outer core serve as a platform for other, more peripherally associated AMPAR constituents, including LRRTM4. Alone or in combination, these auxiliary subunits control the gating and pharmacology of the AMPAR complex and profoundly impact their biogenesis and protein processing. As to expression, predominantly in the brain (at protein level). Also expressed in the cerebellum and other tissues.

It is found in the cell membrane. Its subcellular location is the postsynaptic cell membrane. Functionally, may play a role in the development and maintenance of the vertebrate nervous system. Exhibits strong synaptogenic activity, restricted to excitatory presynaptic differentiation. The sequence is that of Leucine-rich repeat transmembrane neuronal protein 4 (Lrrtm4) from Mus musculus (Mouse).